The following is a 655-amino-acid chain: p-hydroxybenzoic acid efflux pump subunit AaeB (655 aa).

A run of 11 helical transmembrane segments spans residues 13-33, 38-58, 69-89, 93-113, 121-141, 152-172, 370-390, 407-427, 431-451, 459-479, and 482-502; these read FAVK…HFQL, WAVL…GGEP, LRII…ILMI, LLMV…SSLV, WGLA…EPLL, EIVI…PRSI, LFWL…IAVV, FLYG…VILP, QSML…GIEV, LGAL…TFHF, and FLDS…VILL.

The protein belongs to the aromatic acid exporter ArAE (TC 2.A.85) family.

The protein resides in the cell inner membrane. Forms an efflux pump with AaeA. Could function as a metabolic relief valve, allowing to eliminate certain compounds when they accumulate to high levels in the cell. The protein is p-hydroxybenzoic acid efflux pump subunit AaeB of Enterobacter cloacae subsp. cloacae (strain ATCC 13047 / DSM 30054 / NBRC 13535 / NCTC 10005 / WDCM 00083 / NCDC 279-56).